The sequence spans 182 residues: Crossover junction endodeoxyribonuclease RuvC (182 aa).

Residues D7, E67, and D139 contribute to the active site. D7, E67, and D139 together coordinate Mg(2+).

Belongs to the RuvC family. In terms of assembly, homodimer which binds Holliday junction (HJ) DNA. The HJ becomes 2-fold symmetrical on binding to RuvC with unstacked arms; it has a different conformation from HJ DNA in complex with RuvA. In the full resolvosome a probable DNA-RuvA(4)-RuvB(12)-RuvC(2) complex forms which resolves the HJ. Mg(2+) is required as a cofactor.

It is found in the cytoplasm. It catalyses the reaction Endonucleolytic cleavage at a junction such as a reciprocal single-stranded crossover between two homologous DNA duplexes (Holliday junction).. In terms of biological role, the RuvA-RuvB-RuvC complex processes Holliday junction (HJ) DNA during genetic recombination and DNA repair. Endonuclease that resolves HJ intermediates. Cleaves cruciform DNA by making single-stranded nicks across the HJ at symmetrical positions within the homologous arms, yielding a 5'-phosphate and a 3'-hydroxyl group; requires a central core of homology in the junction. The consensus cleavage sequence is 5'-(A/T)TT(C/G)-3'. Cleavage occurs on the 3'-side of the TT dinucleotide at the point of strand exchange. HJ branch migration catalyzed by RuvA-RuvB allows RuvC to scan DNA until it finds its consensus sequence, where it cleaves and resolves the cruciform DNA. The polypeptide is Crossover junction endodeoxyribonuclease RuvC (Bordetella pertussis (strain Tohama I / ATCC BAA-589 / NCTC 13251)).